We begin with the raw amino-acid sequence, 184 residues long: ATP synthase subunit b 1 (184 aa).

Residues 36 to 55 (NILNLAILVGVLVFYGRKVV) traverse the membrane as a helical segment.

Belongs to the ATPase B chain family. As to quaternary structure, F-type ATPases have 2 components, F(1) - the catalytic core - and F(0) - the membrane proton channel. F(1) has five subunits: alpha(3), beta(3), gamma(1), delta(1), epsilon(1). F(0) has four main subunits: a(1), b(1), b'(1) and c(10-14). The alpha and beta chains form an alternating ring which encloses part of the gamma chain. F(1) is attached to F(0) by a central stalk formed by the gamma and epsilon chains, while a peripheral stalk is formed by the delta, b and b' chains.

It localises to the cellular thylakoid membrane. Functionally, f(1)F(0) ATP synthase produces ATP from ADP in the presence of a proton or sodium gradient. F-type ATPases consist of two structural domains, F(1) containing the extramembraneous catalytic core and F(0) containing the membrane proton channel, linked together by a central stalk and a peripheral stalk. During catalysis, ATP synthesis in the catalytic domain of F(1) is coupled via a rotary mechanism of the central stalk subunits to proton translocation. In terms of biological role, component of the F(0) channel, it forms part of the peripheral stalk, linking F(1) to F(0). The polypeptide is ATP synthase subunit b 1 (Crocosphaera subtropica (strain ATCC 51142 / BH68) (Cyanothece sp. (strain ATCC 51142))).